The primary structure comprises 170 residues: Flavin reductase (NADPH) (170 aa).

This sequence belongs to the non-flavoprotein flavin reductase family.

The catalysed reaction is reduced riboflavin + NADP(+) = riboflavin + NADPH + 2 H(+). Its function is as follows. Catalyzes the NADH-dependent reduction of FAD to provide FADH2 for the halogenase RebH. This chain is Flavin reductase (NADPH) (rbmH), found in Lentzea aerocolonigenes (Lechevalieria aerocolonigenes).